Reading from the N-terminus, the 162-residue chain is Lymphocyte antigen 86 (162 aa).

An N-terminal signal peptide occupies residues 1–19 (MNGVAAALLVWILTSPSSS). Disulfide bonds link cysteine 33-cysteine 58, cysteine 45-cysteine 154, and cysteine 102-cysteine 112. N-linked (GlcNAc...) asparagine glycosylation is present at asparagine 96. Asparagine 156 is a glycosylation site (N-linked (GlcNAc...) asparagine).

In terms of assembly, M-shaped tetramer of two CD180-LY86 heterodimers. As to expression, highly expressed in spleen, liver, brain and thymus, and at lower levels in kidney.

It is found in the secreted. The protein resides in the extracellular space. Functionally, may cooperate with CD180 and TLR4 to mediate the innate immune response to bacterial lipopolysaccharide (LPS) and cytokine production. Important for efficient CD180 cell surface expression. The protein is Lymphocyte antigen 86 (Ly86) of Mus musculus (Mouse).